Consider the following 1409-residue polypeptide: Inositol hexakisphosphate and diphosphoinositol-pentakisphosphate kinase 1 (1409 aa).

64–65 (KK) contributes to the substrate binding site. Residues arginine 145, lysine 198, histidine 205, arginine 224, 248–251 (EEFM), and 257–259 (DVK) contribute to the ATP site. 224–225 (RK) serves as a coordination point for substrate. The substrate site is built by lysine 259 and arginine 273. ATP is bound by residues serine 275, aspartate 320, and 332–334 (DVN). 337–340 (SFVK) lines the substrate pocket. Positions 382-453 (PTTSGTMMEL…VLDITRLLLA (72 aa)) are polyphosphoinositide-binding domain. A disordered region spans residues 891–996 (GVEEEGSAPA…PTEMKQSGLG (106 aa)). Residues serine 920 and serine 963 each carry the phosphoserine modification. A compositionally biased stretch (polar residues) spans 981–996 (FSSSRPPTEMKQSGLG). A phosphoserine mark is found at serine 1013 and serine 1049. Positions 1110-1119 (MHSSQASDNP) are enriched in polar residues. The segment at 1110–1183 (MHSSQASDNP…PSLNSHVAEE (74 aa)) is disordered. Serine 1121 and serine 1128 each carry phosphoserine. The segment covering 1144-1162 (SSGPSSTVSSAGPSSPTTV) has biased composition (low complexity). Residues 1163 to 1178 (DGNSQFGFSDQPSLNS) show a composition bias toward polar residues.

The protein belongs to the histidine acid phosphatase family. VIP1 subfamily.

The protein localises to the cytoplasm. Its subcellular location is the cytosol. It is found in the cell membrane. The catalysed reaction is 1D-myo-inositol hexakisphosphate + ATP = 1-diphospho-1D-myo-inositol 2,3,4,5,6-pentakisphosphate + ADP. It carries out the reaction 5-diphospho-1D-myo-inositol 1,2,3,4,6-pentakisphosphate + ATP + H(+) = 1,5-bis(diphospho)-1D-myo-inositol 2,3,4,6-tetrakisphosphate + ADP. In terms of biological role, bifunctional inositol kinase that acts in concert with the IP6K kinases IP6K1, IP6K2 and IP6K3 to synthesize the diphosphate group-containing inositol pyrophosphates diphosphoinositol pentakisphosphate, PP-InsP5, and bis-diphosphoinositol tetrakisphosphate, (PP)2-InsP4. PP-InsP5 and (PP)2-InsP4, also respectively called InsP7 and InsP8, regulate a variety of cellular processes, including apoptosis, vesicle trafficking, cytoskeletal dynamics, exocytosis, insulin signaling and neutrophil activation. Phosphorylates inositol hexakisphosphate (InsP6) at position 1 to produce PP-InsP5 which is in turn phosphorylated by IP6Ks to produce (PP)2-InsP4. Alternatively, phosphorylates PP-InsP5 at position 1, produced by IP6Ks from InsP6, to produce (PP)2-InsP4. Activated when cells are exposed to hyperosmotic stress. In Pongo abelii (Sumatran orangutan), this protein is Inositol hexakisphosphate and diphosphoinositol-pentakisphosphate kinase 1.